The following is a 57-amino-acid chain: Large ribosomal subunit protein bL32 (57 aa).

Over residues 1 to 20 (MAVPKRRMSRSNTRSRRAQW) the composition is skewed to basic residues. A disordered region spans residues 1–22 (MAVPKRRMSRSNTRSRRAQWKA).

This sequence belongs to the bacterial ribosomal protein bL32 family.

This is Large ribosomal subunit protein bL32 from Mycobacterium sp. (strain JLS).